Consider the following 802-residue polypeptide: Neuronal PAS domain-containing protein 4 (802 aa).

The basic motif; degenerate stretch occupies residues 1–13; that stretch reads MYRSTKGASKARR. Residues 1–53 form the bHLH domain; it reads MYRSTKGASKARRDQINAEIRNLKELLPLAEADKVRLSYLHIMSLACIYTRKG. A coiled-coil region spans residues 5–38; sequence TKGASKARRDQINAEIRNLKELLPLAEADKVRLS. Residues 14–53 form a helix-loop-helix motif region; the sequence is DQINAEIRNLKELLPLAEADKVRLSYLHIMSLACIYTRKG. 2 consecutive PAS domains span residues 70–144 and 203–275; these read SAQE…LDAD and PGPG…LAEN. The PAC domain maps to 280-319; sequence AEMVVRLQAKHGGWTWIYCMLYSDGPEGPITANNYPISDT. 3 stretches are compositionally biased toward polar residues: residues 472-495, 502-518, and 527-555; these read PSSATFPDPLTSSLQGQLTESSAR, TPCTSTFPDQLLPSTAT, and THEQLTPPSTAFQAHLNSPSQTFPEQLSP. Positions 472-555 are disordered; sequence PSSATFPDPL…SQTFPEQLSP (84 aa). A coiled-coil region spans residues 624–648; sequence YTEKEQNEIDRLIQQISQLAQGMDR.

In terms of assembly, efficient DNA binding requires dimerization with another bHLH protein. Heterodimer; forms a heterodimer with ARNT, ARNT2 or BMAL1. Ubiquitinated, leading to degradation by the proteosome. Specifically expressed in neurons. Expressed in the lateral nucleus of the amygdala (at protein level).

The protein localises to the nucleus. Functionally, transcription factor expressed in neurons of the brain that regulates the excitatory-inhibitory balance within neural circuits and is required for contextual memory in the hippocampus. Plays a key role in the structural and functional plasticity of neurons. Acts as an early-response transcription factor in both excitatory and inhibitory neurons, where it induces distinct but overlapping sets of late-response genes in these two types of neurons, allowing the synapses that form on inhibitory and excitatory neurons to be modified by neuronal activity in a manner specific to their function within a circuit, thereby facilitating appropriate circuit responses to sensory experience. In excitatory neurons, activates transcription of BDNF, which in turn controls the number of GABA-releasing synapses that form on excitatory neurons, thereby promoting an increased number of inhibitory synapses on excitatory neurons. In inhibitory neurons, regulates a distinct set of target genes that serve to increase excitatory input onto somatostatin neurons, probably resulting in enhanced feedback inhibition within cortical circuits. The excitatory and inhibitory balance in neurons affects a number of processes, such as short-term and long-term memory, acquisition of experience, fear memory, response to stress and social behavior. Acts as a regulator of dendritic spine development in olfactory bulb granule cells in a sensory-experience-dependent manner by regulating expression of MDM2. Efficient DNA binding requires dimerization with another bHLH protein, such as ARNT, ARNT2 or BMAL1. Can activate the CME (CNS midline enhancer) element. In Rattus norvegicus (Rat), this protein is Neuronal PAS domain-containing protein 4.